The sequence spans 347 residues: Protein RecA (347 aa).

65–72 (GPESSGKT) contributes to the ATP binding site.

The protein belongs to the RecA family.

It localises to the cytoplasm. Functionally, can catalyze the hydrolysis of ATP in the presence of single-stranded DNA, the ATP-dependent uptake of single-stranded DNA by duplex DNA, and the ATP-dependent hybridization of homologous single-stranded DNAs. It interacts with LexA causing its activation and leading to its autocatalytic cleavage. The protein is Protein RecA of Marinobacter nauticus (strain ATCC 700491 / DSM 11845 / VT8) (Marinobacter aquaeolei).